The primary structure comprises 239 residues: Norbelladine 4'-O-methyltransferase 4 (239 aa).

S-adenosyl-L-methionine-binding positions include valine 55, glutamate 77, 79–80 (GV), serine 85, aspartate 103, and alanine 132. Position 155 (aspartate 155) interacts with a divalent metal cation. Aspartate 157 is an S-adenosyl-L-methionine binding site. Positions 181 and 182 each coordinate a divalent metal cation.

The protein belongs to the class I-like SAM-binding methyltransferase superfamily. Cation-dependent O-methyltransferase family. Requires Mg(2+) as cofactor.

It carries out the reaction norbelladine + S-adenosyl-L-methionine = 4'-O-methylnorbelladine + S-adenosyl-L-homocysteine + H(+). Its pathway is alkaloid biosynthesis. Functionally, 4'-O-methyltransferase converting norbelladine to 4'-O-methylnorbelladine. 4'-O-methylnorbelladine is a precursor to all Amaryllidaceae alkaloids such as galanthamine, lycorine and haemanthamine, and including haemanthamine- and crinamine-type alkaloids, promising anticancer agents. This chain is Norbelladine 4'-O-methyltransferase 4, found in Narcissus aff. pseudonarcissus MK-2014 (Daffodil).